Consider the following 283-residue polypeptide: Shikimate dehydrogenase (NADP(+)) (283 aa).

Shikimate contacts are provided by residues 19–21 (SLS) and threonine 66. Lysine 70 functions as the Proton acceptor in the catalytic mechanism. The shikimate site is built by asparagine 91 and aspartate 106. Residues 129–133 (GAGGA), 153–158 (NRTPEK), and leucine 224 each bind NADP(+). Tyrosine 226 serves as a coordination point for shikimate. Glycine 247 contacts NADP(+).

It belongs to the shikimate dehydrogenase family. Homodimer.

It carries out the reaction shikimate + NADP(+) = 3-dehydroshikimate + NADPH + H(+). Its pathway is metabolic intermediate biosynthesis; chorismate biosynthesis; chorismate from D-erythrose 4-phosphate and phosphoenolpyruvate: step 4/7. In terms of biological role, involved in the biosynthesis of the chorismate, which leads to the biosynthesis of aromatic amino acids. Catalyzes the reversible NADPH linked reduction of 3-dehydroshikimate (DHSA) to yield shikimate (SA). In Methanothermobacter thermautotrophicus (strain ATCC 29096 / DSM 1053 / JCM 10044 / NBRC 100330 / Delta H) (Methanobacterium thermoautotrophicum), this protein is Shikimate dehydrogenase (NADP(+)).